Reading from the N-terminus, the 72-residue chain is Translation initiation factor IF-1 (72 aa).

Residues 1–72 enclose the S1-like domain; that stretch reads MSKEGKITLK…TRGRIIYRIS (72 aa).

This sequence belongs to the IF-1 family. Component of the 30S ribosomal translation pre-initiation complex which assembles on the 30S ribosome in the order IF-2 and IF-3, IF-1 and N-formylmethionyl-tRNA(fMet); mRNA recruitment can occur at any time during PIC assembly.

The protein localises to the cytoplasm. Functionally, one of the essential components for the initiation of protein synthesis. Stabilizes the binding of IF-2 and IF-3 on the 30S subunit to which N-formylmethionyl-tRNA(fMet) subsequently binds. Helps modulate mRNA selection, yielding the 30S pre-initiation complex (PIC). Upon addition of the 50S ribosomal subunit IF-1, IF-2 and IF-3 are released leaving the mature 70S translation initiation complex. In Malacoplasma penetrans (strain HF-2) (Mycoplasma penetrans), this protein is Translation initiation factor IF-1.